A 369-amino-acid chain; its full sequence is 4beta-methylsterol monooxygenase (369 aa).

Residues 29 to 135 (WYVVEIDGRL…VKAQWGLIWL (107 aa)) enclose the Rieske domain. Positions 70, 72, 89, and 92 each coordinate [2Fe-2S] cluster.

The cofactor is [2Fe-2S] cluster.

The catalysed reaction is a 3beta-hydroxy-4,4-dimethylsteroid + 3 NADH + 3 O2 + 2 H(+) = a 3beta-hydroxy-4alpha-methylsteroid-4beta-carboxylate + 3 NAD(+) + 4 H2O. The enzyme catalyses 4,4-dimethyl-5alpha-cholesta-8,24-dien-3beta-ol + 3 NADH + 3 O2 + 2 H(+) = 4beta-carboxy-4alpha-methyl-5alpha-cholesta-8,24-dien-3beta-ol + 3 NAD(+) + 4 H2O. It catalyses the reaction a 3beta-hydroxy-4,4-dimethylsteroid + NADH + O2 + H(+) = a 3beta-hydroxy-4beta-hydroxymethyl-4alpha-methylsteroid + NAD(+) + H2O. It carries out the reaction a 3beta-hydroxy-4beta-hydroxymethyl-4alpha-methylsteroid + NADH + O2 + H(+) = a 3beta-hydroxy-4beta-formyl-4alpha-methylsteroid + NAD(+) + 2 H2O. The catalysed reaction is a 3beta-hydroxy-4beta-formyl-4alpha-methylsteroid + NADH + O2 = a 3beta-hydroxy-4alpha-methylsteroid-4beta-carboxylate + NAD(+) + H2O. The enzyme catalyses 4,4-dimethyl-5alpha-cholesta-8,24-dien-3beta-ol + NADH + O2 + H(+) = 4beta-hydroxymethyl-4alpha-methylzymosterol + NAD(+) + H2O. It catalyses the reaction 4beta-hydroxymethyl-4alpha-methylzymosterol + NADH + O2 + H(+) = 4beta-formylmethyl-4alpha-methyl-5alpha-cholesta-8,24-dien-3beta-ol + NAD(+) + 2 H2O. It carries out the reaction 4beta-formylmethyl-4alpha-methyl-5alpha-cholesta-8,24-dien-3beta-ol + NADH + O2 = 4beta-carboxy-4alpha-methyl-5alpha-cholesta-8,24-dien-3beta-ol + NAD(+) + H2O. It functions in the pathway steroid biosynthesis; sterol biosynthesis. Participates in the biosynthesis of bacterial sterols. Together with SdmB, removes one methyl group from the C-4 position of 4,4-dimethylated steroid molecules. SdmA oxidizes the sterol 4beta-methyl group into first a hydroxyl, then an aldehyde and finally a carboxylic acid group. In Methylococcus capsulatus (strain ATCC 33009 / NCIMB 11132 / Bath), this protein is 4beta-methylsterol monooxygenase.